A 730-amino-acid polypeptide reads, in one-letter code: Synaptogenesis protein syg-1 (730 aa).

The first 18 residues, 1–18 (MVRWQTWPLLLLFQLVTC), serve as a signal peptide directing secretion. The Extracellular portion of the chain corresponds to 19–551 (QQLQQRIVEA…WIVITAKFDR (533 aa)). Ig-like domains follow at residues 23 to 123 (QRIV…AKLT), 131 to 265 (PKIV…VKLS), 270 to 352 (PQIN…IKLN), 357 to 433 (ARIM…QILS), and 441 to 540 (PPTV…RNIL). 5 cysteine pairs are disulfide-bonded: cysteine 44-cysteine 104, cysteine 152-cysteine 246, cysteine 292-cysteine 336, cysteine 378-cysteine 420, and cysteine 462-cysteine 519. 2 N-linked (GlcNAc...) asparagine glycosylation sites follow: asparagine 93 and asparagine 206. The chain crosses the membrane as a helical span at residues 552–572 (MVALAIISAGVLLVSLLCCLC). Residues 573–730 (MCRSNCRSRK…RPISRTSTHV (158 aa)) are Cytoplasmic-facing.

The protein belongs to the immunoglobulin superfamily. As to quaternary structure, interacts with skr-1. Interacts with syg-2. Interacts with the WAVE regulatory complex; the interaction leads to formation of a synaptic F-actin network that is required for synapse formation and axon branching. Expression in head motor neurons, occasionally in HSN neurons and weakly in other cells in the vulval region. Expressed in the primary synapse region of HSNL motor neuron.

It is found in the cell membrane. The protein resides in the cell projection. Its subcellular location is the axon. It localises to the synapse. In terms of biological role, cell adhesion protein. Involved in synapse formation in the HSNL egg-laying motor neuron. Inhibits assembly of the SCF(sel-10) E3 ubiquitin ligase complex at synapses, and protects them from elimination. Also required for F-actin assembly at the synaptic region and for axon branch formation. The sequence is that of Synaptogenesis protein syg-1 from Caenorhabditis elegans.